A 306-amino-acid polypeptide reads, in one-letter code: Mediator of RNA polymerase II transcription subunit 30 (306 aa).

Disordered stretches follow at residues M1–P22 and Q51–A148. A compositionally biased stretch (low complexity) spans Q51–G128.

The protein belongs to the Mediator complex subunit 30 family. In terms of assembly, component of the Mediator complex.

Its subcellular location is the nucleus. Functionally, component of the Mediator complex, a coactivator involved in the regulated transcription of nearly all RNA polymerase II-dependent genes. Mediator functions as a bridge to convey information from gene-specific regulatory proteins to the basal RNA polymerase II transcription machinery. Mediator is recruited to promoters by direct interactions with regulatory proteins and serves as a scaffold for the assembly of a functional preinitiation complex with RNA polymerase II and the general transcription factors. The sequence is that of Mediator of RNA polymerase II transcription subunit 30 (MED30) from Aedes aegypti (Yellowfever mosquito).